Consider the following 1141-residue polypeptide: MARYTQRPENALKRANEFIEVGKPLRALDTLQEVFRNKRWNYAYSETVIEPLMFKYLYLCVELKKSHIAKEGLFQYRNMFQLVNVNSLENVIRGYLKMAEEHTEAAQAQSSAAVAVLELDDLDNIATPESILMSAVCGEDAQDRSDRTILLPWVKFLWESYCQCLELLRVNTHCEALYHDIARMAFQFCLKYNRKSEFRRLCDKLRKHLEDICKSSNQTTGVSINKVETQQLCLDTRLYLLDSAIQMELWQEAYKAIEDIHGLMALSKKTPVPKTMANYYQKLAMVFSKAGNQLFHAAALLKLFQLTRELKKNLTKDDLQRMAAHVLLATLSIPLPSAHPEFDRFIEADKSPLEKAQKLAVLLGLPQPPTRVSLIREVVRLNVPQLVSEDFRNLYNWLEVDFNPLNLCKRIQSIVDFIENGPENALLTPYIQSLKDVTIMRLIRQISQVYESIKFQRLLQLASFCNIFELEKLLVESVRHNDMQIRIDHQKNSIYFGTDLTESQREYRPDGPALQSMPSEQIRSQLVNMSTVLTRAVSIVYPNRERDQRAKLRNQMVSQYHEIKDREHQRILQRQKIIEDRKEYIEKQNNAREEEEARRQEEESRKAKLAEQKRLEQEQEERERKRHQNEIQAIREKSLKEKVQQISQTAHGKKMLSKLDEEGIKKLDAEQIAKRESEELQREAKELQSKLKSQEKKIDYFERAKRLEEIPLFEKYLAEKQVKDKEFWEATEKTRIENAIAERMDAVAQQERLKRMYPDRDEFLEALKKERASLYVEKLKKFEAALEAERKKRLADRIVRRREERRQAFLREKEEERLRKEEEIRLAQAAEERAAAEARRLEREAEDEKRRAQYEKQRAKEEEAERKIKEDRDRLSRELASERERTEKERDTWRPRGGDRPSASAGGSSEWRRAAPAVSERNDRGGERIERGGDRVERGGERIERGGERIERGGDRDRKDNEGADSSWRVRREPDTQRAAAPKDSGAPQSRDDKWRRGGERDRDFRNDGARRDRDDGPRRDRDDGPRRDRDDERGGFRRNDGPRRTDEPQRESGGNWRDAPRHADRENRRPAGERRDRDVRETRGDQRGSAPKEAASGGGGGNWRNAPATREEKPAAKRDQAQEKENKAGDDGEWTSVKRR.

The 183-residue stretch at 319-501 (LQRMAAHVLL…NSIYFGTDLT (183 aa)) folds into the PCI domain. 2 stretches are compositionally biased toward basic and acidic residues: residues 588 to 623 (QNNAREEEEARRQEEESRKAKLAEQKRLEQEQEERE) and 829 to 899 (AAEE…RGGD). Disordered stretches follow at residues 588–631 (QNNA…QNEI) and 829–1141 (AAEE…VKRR). At Ser-908 the chain carries Phosphoserine. 4 stretches are compositionally biased toward basic and acidic residues: residues 920–976 (ERND…EPDT), 990–1051 (SRDD…EPQR), 1059–1087 (DAPRHADRENRRPAGERRDRDVRETRGDQ), and 1110–1131 (TREEKPAAKRDQAQEKENKAGD).

Belongs to the eIF-3 subunit A family. Component of the eukaryotic translation initiation factor 3 (eIF-3) complex. The eIF-3 complex interacts with pix.

The protein resides in the cytoplasm. RNA-binding component of the eukaryotic translation initiation factor 3 (eIF-3) complex, which is involved in protein synthesis of a specialized repertoire of mRNAs and, together with other initiation factors, stimulates binding of mRNA and methionyl-tRNAi to the 40S ribosome. The eIF-3 complex specifically targets and initiates translation of a subset of mRNAs involved in cell proliferation. The polypeptide is Eukaryotic translation initiation factor 3 subunit A (Drosophila sechellia (Fruit fly)).